Reading from the N-terminus, the 222-residue chain is tRNA (guanine-N(1)-)-methyltransferase (222 aa).

Residues Gly-112 and 132–137 contribute to the S-adenosyl-L-methionine site; that span reads IGDYVL.

This sequence belongs to the RNA methyltransferase TrmD family. As to quaternary structure, homodimer.

Its subcellular location is the cytoplasm. The enzyme catalyses guanosine(37) in tRNA + S-adenosyl-L-methionine = N(1)-methylguanosine(37) in tRNA + S-adenosyl-L-homocysteine + H(+). Its function is as follows. Specifically methylates guanosine-37 in various tRNAs. The chain is tRNA (guanine-N(1)-)-methyltransferase from Azobacteroides pseudotrichonymphae genomovar. CFP2.